Consider the following 349-residue polypeptide: D-alanine--D-alanine ligase (349 aa).

In terms of domain architecture, ATP-grasp spans 140–345; that stretch reads NILFEAMGIP…MKDVFTWLLE (206 aa). 169–224 contacts ATP; it reads NLSFSYPVFIKPTLGGSSVNTGMAKTAEEAMTLVDKIFVTDDRVLVQKLVSGTEVS. 3 residues coordinate Mg(2+): Asp300, Glu312, and Asn314.

It belongs to the D-alanine--D-alanine ligase family. The cofactor is Mg(2+). Mn(2+) is required as a cofactor.

Its subcellular location is the cytoplasm. The catalysed reaction is 2 D-alanine + ATP = D-alanyl-D-alanine + ADP + phosphate + H(+). It participates in cell wall biogenesis; peptidoglycan biosynthesis. Functionally, cell wall formation. The chain is D-alanine--D-alanine ligase from Leptospira biflexa serovar Patoc (strain Patoc 1 / Ames).